Consider the following 190-residue polypeptide: MTYEIQASVREAQGTGASRRLRREGQIPGILYGEGQEPVAIAVDHKTVFYALEKESFHTALIKLSLNGETKDVIVRDFQMHPFRREVQHIDFQAVKADQPVRIRVPLHIVNAENSQAVKLQGGRVSLLNTSVEVVALPANIPAFLDLDCAEVVAGDILHLSDIKLPEGVESVSLKRNENLAVATVTGKKR.

Belongs to the bacterial ribosomal protein bL25 family. CTC subfamily. As to quaternary structure, part of the 50S ribosomal subunit; part of the 5S rRNA/L5/L18/L25 subcomplex. Contacts the 5S rRNA. Binds to the 5S rRNA independently of L5 and L18.

In terms of biological role, this is one of the proteins that binds to the 5S RNA in the ribosome where it forms part of the central protuberance. The sequence is that of Large ribosomal subunit protein bL25 from Neisseria meningitidis serogroup C / serotype 2a (strain ATCC 700532 / DSM 15464 / FAM18).